We begin with the raw amino-acid sequence, 704 residues long: Lebercilin (704 aa).

Basic and acidic residues predominate over residues 1–14; sequence MGERARSPDIEQGK. The interval 1-80 is disordered; sequence MGERARSPDI…VSPKAVPSKK (80 aa). A Phosphoserine modification is found at serine 7. The span at 25 to 40 shows a compositional bias: low complexity; it reads SSDLGSSPQSSGPSSP. Serine 48 carries the post-translational modification Phosphoserine. The segment covering 49–63 has biased composition (basic and acidic residues); that stretch reads TREKNPKRHLSDNQV. A coiled-coil region spans residues 105-300; that stretch reads KRVLSARLLK…KEKELDIKNI (196 aa). Disordered regions lie at residues 389–417 and 476–661; these read QEGK…AREE and ELQD…GDEE. Basic and acidic residues predominate over residues 404 to 417; the sequence is QEARKPESEWAREE. Residues 448 to 479 adopt a coiled-coil conformation; sequence AQSVDKFEDEAERLKTEMLLAKLNEINKELQD. Over residues 496–505 the composition is skewed to basic and acidic residues; that stretch reads SKLHSPDRST. The span at 570 to 591 shows a compositional bias: polar residues; it reads GKSNPPSQKSSLLDFQSNSSES. Positions 592–608 are enriched in basic and acidic residues; the sequence is PSKDSLDLMSRKEKKAT. Positions 617 to 627 are enriched in low complexity; sequence SASNTSVSSKS.

It belongs to the LCA5 family. In terms of assembly, interacts with NINL. Interacts with OFD1. Interacts with FAM161A. Interacts with components of the IFT complex B. Detected in several tissues.

The protein localises to the cytoplasm. Its subcellular location is the cytoskeleton. It localises to the cilium axoneme. The protein resides in the cilium basal body. It is found in the cell projection. The protein localises to the cilium. Functionally, involved in intraflagellar protein (IFT) transport in photoreceptor cilia. The sequence is that of Lebercilin (Lca5) from Mus musculus (Mouse).